The sequence spans 450 residues: Coiled-coil domain-containing protein 149-A (450 aa).

2 coiled-coil regions span residues 1–197 (MANQ…DRRK) and 259–286 (IQHQRQTNRILGNRVADLERKLKTLEIS). The tract at residues 290-358 (SLPDDRTGRG…NGQVGTQLKE (69 aa)) is disordered. Residues 343–354 (PSGTRTNGQVGT) show a composition bias toward polar residues.

Belongs to the CCDC149 family.

The sequence is that of Coiled-coil domain-containing protein 149-A (ccdc149a) from Danio rerio (Zebrafish).